The following is a 39-amino-acid chain: Phospholipase A2 (39 aa).

Ca(2+) contacts are provided by tryptophan 10, glycine 12, and glycine 14. A disulfide bridge links cysteine 11 with cysteine 33. Histidine 36 is an active-site residue. Residue aspartate 37 coordinates Ca(2+).

Ca(2+) is required as a cofactor. As to expression, expressed uniformly in tentacles (at protein level).

It localises to the secreted. Its subcellular location is the nematocyst. It catalyses the reaction a 1,2-diacyl-sn-glycero-3-phosphocholine + H2O = a 1-acyl-sn-glycero-3-phosphocholine + a fatty acid + H(+). With respect to regulation, inhibited by morin and p-BPB. Its function is as follows. PA2 catalyzes the calcium-dependent hydrolysis of the 2-acyl groups in 3-sn-phosphoglycerides. Induces insulin secretion in isolated rat islets under high glucose concentration conditions, but not under low glucose concentration conditions. Increases perfusion pressure, renal vascular resistance, urinary flow, glomerular filtration rate, and potassium, sodium, and chloride excretion levels in rat kidney. Does not increase perfusion pressure in the rat mesenteric vascular bed. This is Phospholipase A2 from Bunodosoma caissarum (Sea anemone).